The primary structure comprises 398 residues: Elongation factor Tu (398 aa).

Positions Lys-10 to Glu-208 constitute a tr-type G domain. Positions Gly-19–Thr-26 are G1. Gly-19–Thr-26 is a GTP binding site. Thr-26 serves as a coordination point for Mg(2+). Positions Gly-61 to Ala-65 are G2. The segment at Asp-82–Gly-85 is G3. GTP is bound by residues Asp-82 to His-86 and Asn-137 to Asp-140. Residues Asn-137–Asp-140 form a G4 region. The segment at Ser-175–Leu-177 is G5.

This sequence belongs to the TRAFAC class translation factor GTPase superfamily. Classic translation factor GTPase family. EF-Tu/EF-1A subfamily. As to quaternary structure, monomer.

It localises to the cytoplasm. The enzyme catalyses GTP + H2O = GDP + phosphate + H(+). Functionally, GTP hydrolase that promotes the GTP-dependent binding of aminoacyl-tRNA to the A-site of ribosomes during protein biosynthesis. In Marinobacter nauticus (strain ATCC 700491 / DSM 11845 / VT8) (Marinobacter aquaeolei), this protein is Elongation factor Tu.